Consider the following 1033-residue polypeptide: NACHT, LRR and PYD domains-containing protein 11 (1033 aa).

The Pyrin domain occupies 1–91 (MAESDSTDFD…CRKIIGRRNR (91 aa)). The NACHT domain occupies 147-470 (LNVFLMGERA…AFLMAVPNYL (324 aa)). 153 to 160 (GERASGKT) is an ATP binding site. LRR repeat units follow at residues 588 to 611 (CCHL…LIRP), 632 to 655 (MESL…ILSK), 745 to 768 (GGSL…ILCD), 802 to 827 (SPTL…TFPL), 859 to 882 (NEKL…LLCG), and 919 to 944 (LERL…LISP).

This sequence belongs to the NLRP family.

Functionally, involved in inflammation. This Homo sapiens (Human) protein is NACHT, LRR and PYD domains-containing protein 11 (NLRP11).